We begin with the raw amino-acid sequence, 520 residues long: Laccase (520 aa).

An N-terminal signal peptide occupies residues 1 to 21 (MSRFQSLLAFVVASLAAVAHA). Plastocyanin-like domains lie at 23–148 (IGPT…FVVY) and 160–302 (VDND…ILRY). Residues asparagine 72 and asparagine 75 are each glycosylated (N-linked (GlcNAc...) asparagine). 4 residues coordinate Cu cation: histidine 85, histidine 87, histidine 130, and histidine 132. Intrachain disulfides connect cysteine 106–cysteine 509 and cysteine 138–cysteine 226. Residues asparagine 210, asparagine 229, and asparagine 354 are each glycosylated (N-linked (GlcNAc...) asparagine). The 123-residue stretch at 369-491 (TVPVLLQIIS…AGFAVVFAED (123 aa)) folds into the Plastocyanin-like 3 domain. Cu cation contacts are provided by histidine 416, histidine 419, histidine 421, histidine 473, cysteine 474, histidine 475, and histidine 479.

Belongs to the multicopper oxidase family. It depends on Cu cation as a cofactor.

The protein localises to the secreted. It catalyses the reaction 4 hydroquinone + O2 = 4 benzosemiquinone + 2 H2O. Functionally, lignin degradation and detoxification of lignin-derived products. Has activity towards guaiacol. This is Laccase from Trametes hirsuta (White-rot fungus).